The primary structure comprises 1038 residues: DNA polymerase delta catalytic subunit (1038 aa).

Residues 1–29 are disordered; the sequence is MSHSIPITSSPPPALKKLKLPNGSEEPSE. The Zn(2+) site is built by C942, C945, C958, and C961. The CysA-type zinc finger occupies 942-961; sequence CVSCRTPLKKDNLGALCPNC. Residues C992, C995, C1005, and C1010 each coordinate [4Fe-4S] cluster. Positions 992–1010 match the CysB motif motif; it reads CQRCQGSLHQEVLCSNKDC.

This sequence belongs to the DNA polymerase type-B family. As to quaternary structure, heterodimer with subunits of 125 kDa and 50 kDa. The 125 kDa subunit contains the polymerase active site and most likely the active site for the 3'-5' exonuclease activity. The cofactor is [4Fe-4S] cluster.

It is found in the nucleus. It carries out the reaction DNA(n) + a 2'-deoxyribonucleoside 5'-triphosphate = DNA(n+1) + diphosphate. Functionally, this polymerase possesses two enzymatic activities: DNA synthesis (polymerase) and an exonucleolytic activity that degrades single-stranded DNA in the 3'- to 5'-direction. The chain is DNA polymerase delta catalytic subunit (POL3) from Candida albicans (Yeast).